A 728-amino-acid polypeptide reads, in one-letter code: MDKAQHTQGKCPVAHGGNTTVASDVMEWWPNALNLDILHQHDNKTNPMDPNFDYREAFKSLDLSAVKQDLRALMTDSKDWWPADWGHYGGLMIRMAWHSAGTYRMADGRGGAGTGNQRFAPLNSWPDNANLDKARRLLWPIKKKYGNKLSWADLIILAGTIAYESMGLKTFGFAGGRADIWHPEKDIYWGSEKQWLAASDAENSRYSGQRDLENPLAAVMMGLIYVNPEGVDGQPDPLKTAQDIRVTFERMAMNDEETVALTAGGHTVGKCHGNGRAENLEAAPEGAELEDQGLGWLNKTSRGIGRDTVTSGIEGAWTTHPTQWDNGYFELLLNYDWELKKSPAGAWQWQPINIKEEHKPVDVEDPSIRLSPIMTDADMAMKMDPEYRKISDRFYQDPAYFSEVFARAWFKLTHRDLGPKSRYLGTDVPAEELIWQDPIPQVDYSLTEQEVTDIKAKILASGLSIAQLVATAWDSARTFRGSDFRGGANGARIRLAPQKDWQGNEPARLQKVLAVLATIQAGLTKSVSIADLIVLGGTAAVEKAAHAAGVHVKVPFAAGRGDSTLAQTDVESFDVLEPLHDAFRNWQKKDYVVQPEEMMLDRTQLMGLTAHEMTVLVGGMRVLGANYDNSKHGVFTDNVGVLSNDFFVNLTDMSYNWKPAGKNLYHIVDRSTDKVKWTATRVDLVFGSNSILRSYAEIYAQDDAKEKFVNDFVKTWTKVMNADRFDLM.

The signal sequence occupies residues 1 to 16 (MDKAQHTQGKCPVAHG). A cross-link (tryptophyl-tyrosyl-methioninium (Trp-Tyr) (with M-251)) is located at residues 97-225 (WHSAGTYRMA…LAAVMMGLIY (129 aa)). Catalysis depends on His98, which acts as the Proton acceptor. A cross-link (tryptophyl-tyrosyl-methioninium (Tyr-Met) (with W-97)) is located at residues 225-251 (YVNPEGVDGQPDPLKTAQDIRVTFERM). A heme b-binding site is contributed by His266.

This sequence belongs to the peroxidase family. Peroxidase/catalase subfamily. As to quaternary structure, homodimer or homotetramer. It depends on heme b as a cofactor. In terms of processing, formation of the three residue Trp-Tyr-Met cross-link is important for the catalase, but not the peroxidase activity of the enzyme.

It carries out the reaction H2O2 + AH2 = A + 2 H2O. The catalysed reaction is 2 H2O2 = O2 + 2 H2O. Its function is as follows. Bifunctional enzyme with both catalase and broad-spectrum peroxidase activity. The polypeptide is Catalase-peroxidase 1 (Shewanella frigidimarina (strain NCIMB 400)).